Reading from the N-terminus, the 452-residue chain is Neuronal acetylcholine receptor subunit alpha-5 (452 aa).

A signal peptide spans 1-27; the sequence is MVQLLAGRWRPTGARRGTRGGLPELSS. Residues 28-239 lie on the Extracellular side of the membrane; sequence AAKHEDSLFR…VIKRLPLFYT (212 aa). N-linked (GlcNAc...) asparagine glycosylation is found at Asn140, Asn168, and Asn214. A disulfide bridge connects residues Cys155 and Cys169. A disulfide bridge connects residues Cys219 and Cys220. Transmembrane regions (helical) follow at residues 240 to 260, 269 to 289, and 302 to 322; these read LFLI…FYLP, LCTS…EIIP, and LVFT…AINI. The Cytoplasmic portion of the chain corresponds to 323–414; sequence HHRSSSTHNA…KFIAQVLDRM (92 aa). A helical membrane pass occupies residues 415-435; it reads FLWTFLLVSIIGTLGLFVPVI. Residues 436 to 452 lie on the Extracellular side of the membrane; sequence YKWANIIVPVHIGNTIK.

This sequence belongs to the ligand-gated ion channel (TC 1.A.9) family. Acetylcholine receptor (TC 1.A.9.1) subfamily. Alpha-5/CHRNA5 sub-subfamily. Neuronal AChR that forms heteropentamers composed of two different type of subunits: alpha and non-alpha (beta). CHRNA5/alpha-5 subunit is only able to form functional nAChRs when co-assembled with another alpha subunit, can be combined to CHRNA4/alpha-4 or CHRNA3/alpha-3 and CHRNB4/beta-4 or CHRNB2/beta-2 to give rise to functional receptors. Interacts with LYPD6.

The protein localises to the synaptic cell membrane. Its subcellular location is the cell membrane. It catalyses the reaction Ca(2+)(in) = Ca(2+)(out). The enzyme catalyses K(+)(in) = K(+)(out). The catalysed reaction is Na(+)(in) = Na(+)(out). With respect to regulation, activated by a myriad of ligands such as acetylcholine, cytisine, nicotine, choline and epibatidine. Functionally, component of neuronal acetylcholine receptors (nAChRs) that function as pentameric, ligand-gated cation channels with high calcium permeability among other activities. nAChRs are excitatory neurotrasnmitter receptors formed by a collection of nAChR subunits known to mediate synaptic transmission in the nervous system and the neuromuscular junction. Each nAchR subunit confers differential attributes to channel properties, including activation, deactivation and desensitization kinetics, pH sensitivity, cation permeability, and binding to allosteric modulators. Has an accessory rather than functional role and is only able to form functional nAChRs when co-assembled with another beta subunit. Participates in pentameric assemblies along with CHRNA3, CHRNA4, CHRNB2 and CHRNB4. Increases receptor sensitivity to acetylcholine and nicotine when associated with CHRNA4 and CHRNB2. Plays a role in nicotine addiction. The protein is Neuronal acetylcholine receptor subunit alpha-5 (Chrna5) of Rattus norvegicus (Rat).